The following is a 207-amino-acid chain: Putative zinc finger protein 137 (207 aa).

Residues cysteine 72–histidine 94 form a C2H2-type 1 zinc finger. The segment at tyrosine 100–histidine 122 adopts a C2H2-type 2; degenerate zinc-finger fold. Residues tyrosine 128–histidine 150 form a C2H2-type 3; degenerate zinc finger. 2 consecutive C2H2-type zinc fingers follow at residues histidine 156–histidine 178 and tyrosine 184–histidine 206.

It belongs to the krueppel C2H2-type zinc-finger protein family.

The protein resides in the nucleus. Its function is as follows. May be involved in transcriptional regulation. The protein is Putative zinc finger protein 137 (ZNF137P) of Homo sapiens (Human).